We begin with the raw amino-acid sequence, 91 residues long: Insertion element IS1 2 protein InsA (91 aa).

It belongs to the IS1 elements InsA family.

Absolutely required for transposition of IS1. This chain is Insertion element IS1 2 protein InsA (insA2), found in Escherichia coli (strain K12).